The chain runs to 205 residues: High frequency lysogenization protein HflD homolog (205 aa).

The protein belongs to the HflD family.

The protein resides in the cytoplasm. The protein localises to the cell inner membrane. The sequence is that of High frequency lysogenization protein HflD homolog from Haemophilus influenzae (strain ATCC 51907 / DSM 11121 / KW20 / Rd).